The chain runs to 189 residues: Large ribosomal subunit protein bL9 (189 aa).

It belongs to the bacterial ribosomal protein bL9 family.

Functionally, binds to the 23S rRNA. This is Large ribosomal subunit protein bL9 from Brucella melitensis biotype 2 (strain ATCC 23457).